Reading from the N-terminus, the 655-residue chain is Large subunit GTPase 1 homolog (655 aa).

Positions 1-31 (MGRRRAPGGGSLGRVLIRHQTQRSRSHRHTD) are disordered. Positions 16–28 (LIRHQTQRSRSHR) are enriched in basic residues. Phosphoserine is present on residues Ser93 and Ser97. The CP-type G domain occupies 164 to 441 (WRQLWRVIER…LCDCPGLVMP (278 aa)). 212-215 (NKAD) contacts GTP. Ser252 is modified (phosphoserine). Positions 253 to 359 (KDEVNSVAGE…ENSQMSNKSH (107 aa)) are disordered. Residues 288–327 (EESESDDDDSEYEDCQEDEEEDWQTCSEEDSNPEEGQEEG) show a composition bias toward acidic residues. Residues 328–339 (GCDRDQKEHGPE) show a composition bias toward basic and acidic residues. Polar residues predominate over residues 344–359 (QSRASPENSQMSNKSH). GTP contacts are provided by residues 390–397 (GYPNVGKS) and 434–437 (DCPG). A disordered region spans residues 625–655 (SAENVPGKPWKKHGNRNKKEKSRRLYRHLDV). Basic residues predominate over residues 633 to 655 (PWKKHGNRNKKEKSRRLYRHLDV).

Belongs to the TRAFAC class YlqF/YawG GTPase family. LSG1 subfamily.

It is found in the cytoplasm. The protein resides in the endoplasmic reticulum. It localises to the nucleus. Its subcellular location is the cajal body. The catalysed reaction is GTP + H2O = GDP + phosphate + H(+). Functionally, functions as a GTPase. May act by mediating the release of NMD3 from the 60S ribosomal subunit after export into the cytoplasm during the 60S ribosomal subunit maturation. This chain is Large subunit GTPase 1 homolog, found in Rattus norvegicus (Rat).